The primary structure comprises 6486 residues: Tyrocidine synthase 3 (6486 aa).

The tract at residues 466–1038 (IFELIAEQAS…VAELARFLSR (573 aa)) is domain 1 (asparagine-activating). Carrier domains are found at residues 965 to 1040 (APQN…SRSE), 2002 to 2077 (APRN…AAAR), 3040 to 3115 (APTN…ATSG), 4075 to 4150 (AAQN…AESA), 5119 to 5194 (APRS…EETA), and 6162 to 6237 (APRN…THKR). O-(pantetheine 4'-phosphoryl)serine is present on residues S1000, S2037, S3075, S4110, S5154, and S6197. The interval 1521 to 2070 (YEEYALTYRE…FESPTIAGLA (550 aa)) is domain 2 (glutamine-activating). The tract at residues 2536-3113 (NKTLQALFEE…IKALAQYVAT (578 aa)) is domain 3 (tyrosine-activating). Positions 3590 to 4149 (EHAAVVMDGQ…HELAAHIAES (560 aa)) are domain 4 (valine-activating). The domain 5 (ornithine-activating) stretch occupies residues 4606–5203 (YPTDKTFQKL…AKGNVFSIEP (598 aa)). Positions 5658 to 6245 (LHQLFEEQVD…KRFESRYGTA (588 aa)) are domain 6 (leucine-activating).

This sequence belongs to the ATP-dependent AMP-binding enzyme family. Large multienzyme complex of TycA, TycB and TycC. The cofactor is pantetheine 4'-phosphate.

It functions in the pathway antibiotic biosynthesis; tyrocidine biosynthesis. In terms of biological role, incorporates six amino acids (for tyrocidine A, Asn, Gln, Tyr, Val, Orn, and Leu) in their L-configuration into the peptide product. The polypeptide is Tyrocidine synthase 3 (tycC) (Brevibacillus parabrevis).